The chain runs to 158 residues: Ribosome maturation factor RimP (158 aa).

The protein belongs to the RimP family.

The protein localises to the cytoplasm. In terms of biological role, required for maturation of 30S ribosomal subunits. This Deinococcus radiodurans (strain ATCC 13939 / DSM 20539 / JCM 16871 / CCUG 27074 / LMG 4051 / NBRC 15346 / NCIMB 9279 / VKM B-1422 / R1) protein is Ribosome maturation factor RimP.